A 62-amino-acid polypeptide reads, in one-letter code: Large ribosomal subunit protein bL28 (62 aa).

The segment at 1 to 23 is disordered; that stretch reads MGKQCYVTGRKASTGNRRSHALN.

The protein belongs to the bacterial ribosomal protein bL28 family.

This is Large ribosomal subunit protein bL28 from Staphylococcus carnosus (strain TM300).